Reading from the N-terminus, the 1418-residue chain is Alpha-latrotoxin-Lhe1a (1418 aa).

The first 20 residues, 1 to 20, serve as a signal peptide directing secretion; sequence MIFVGETMERANHSLVRLRR. The interval 17–20 is furin-like endopeptidase recognition region; it reads RLRR. A helix H8 is the probable transmembrane region of the tetrameric pore inserted in the target cell membrane region spans residues 238-257; the sequence is VLYALLYGTQTYISVMFFLL. Cysteines 413 and 1066 form a disulfide. 22 ANK repeats span residues 458–489, 490–521, 525–554, 559–589, 593–622, 626–656, 660–690, 695–723, 729–758, 762–791, 795–824, 828–857, 862–891, 895–924, 928–957, 971–1003, 1004–1033, 1035–1064, 1068–1097, 1101–1131, 1137–1166, and 1170–1199; these read LYNAASNPDSAVGFKEFTKLNYDGANIRATFD, QGRTIFHAVAKSGNDKILFGLTFLVKSTELNQ, KGYTPIHVAADSGNAGIVNLLIQRGVSINS, FLQTPLHLAAQRGFVNTFQRLMESSEININE, DGFTPLHYAVRGGERILEAFMNQIGIDVNA, KGLTPFHLAIIKNDWQVASTLLRNKKVDINA, NNMTALHYAAILGYLETTKQLINLKEINANV, GLLSALHYAILYKHDDVASFLLRSSNVNV, GGITPLHLAVMQGRKQVLSLMFNIGVNIEQ, EKYTPLHLAAMSKYPELIQILLDQDSNFEA, SGATPLHLATFKGKSQAALILLNNEVNWRD, NGQMPIHGAATTGLLDVAQAIISIDATVLD, NSDTPLNLAAQNSHIDAVKYFIDQGADINT, NGHAPLLAFSKKGNLDMVKYLFDKNANVYI, NGMNFFYYAVRNGHLNIIKYAMSEKDKFEW, EECAISHFAVCDAVQFDKIEIVKFFIGTLGNFN, ICGPLHQAARYGHLHIVKYLVEEEVLSVDG, KTDTPLCYASENGHLAVVQYLVSNGAKVNH, NGMTAIDKAITKNHLQVVQFLAANGVDFRR, RGATPFLTAVAENAFDIAEYLIREKRQDINI, DKETALHLAVYYKNLQMIKLLVKYGIDVTI, and YDKTVLDIATDAKFSNIVKYLKKNSGKFRR. Positions 1026–1032 are 4C4.1 epitope; that stretch reads EEVLSVD. Residues 1196–1199 are furin-like endopeptidase recognition region; sequence KFRR. Positions 1200 to 1418 are excised as a propeptide; that stretch reads EYKSSYGEHS…SEKKIQKISI (219 aa).

The protein belongs to the cationic peptide 01 (latrotoxin) family. 03 (alpha-latrotoxin) subfamily. Homotetramer in membranes. Processed by furin-like proteases at both the N- and C-termini. Expressed in venom gland, cephalothorax, and abdomen tissues from both males and females.

The protein resides in the secreted. It localises to the target cell membrane. Functionally, presynaptic neurotoxin that causes massive release of neurotransmitters from vertebrate (but not invertebrate) nerve terminals and endocrine cells via a complex mechanism involving activation of receptor(s) and toxin insertion into the plasma membrane with subsequent pore formation. Binds to neurexin-1-alpha (NRXN1) in a calcium dependent manner, adhesion G protein-coupled receptor L1 (ADGRL1, also termed latrophilin-1 and calcium-independent receptor of latrotoxin (CIRL)), and receptor-type tyrosine-protein phosphatase S (PTPRS), also termed PTP sigma. NRXN1 and PTPRS are suggested to provide a platform for binding and subsequent pore formation events. In contrast, binding to ADGRL1 does not involve oligomerization and channel formation, but direct downstream stimulation of the synaptic fusion machinery. The protein is Alpha-latrotoxin-Lhe1a of Latrodectus hesperus (Western black widow spider).